The sequence spans 318 residues: Aspartate carbamoyltransferase catalytic subunit (318 aa).

Carbamoyl phosphate is bound by residues R59 and T60. Residue K87 participates in L-aspartate binding. 3 residues coordinate carbamoyl phosphate: R109, H137, and Q140. L-aspartate contacts are provided by R170 and R224. Carbamoyl phosphate-binding residues include G265 and P266.

This sequence belongs to the aspartate/ornithine carbamoyltransferase superfamily. ATCase family. As to quaternary structure, heterododecamer (2C3:3R2) of six catalytic PyrB chains organized as two trimers (C3), and six regulatory PyrI chains organized as three dimers (R2).

It carries out the reaction carbamoyl phosphate + L-aspartate = N-carbamoyl-L-aspartate + phosphate + H(+). It participates in pyrimidine metabolism; UMP biosynthesis via de novo pathway; (S)-dihydroorotate from bicarbonate: step 2/3. Catalyzes the condensation of carbamoyl phosphate and aspartate to form carbamoyl aspartate and inorganic phosphate, the committed step in the de novo pyrimidine nucleotide biosynthesis pathway. The chain is Aspartate carbamoyltransferase catalytic subunit from Rhizobium etli (strain CIAT 652).